The sequence spans 119 residues: Large ribosomal subunit protein uL22 (119 aa).

Belongs to the universal ribosomal protein uL22 family. Part of the 50S ribosomal subunit.

In terms of biological role, this protein binds specifically to 23S rRNA; its binding is stimulated by other ribosomal proteins, e.g. L4, L17, and L20. It is important during the early stages of 50S assembly. It makes multiple contacts with different domains of the 23S rRNA in the assembled 50S subunit and ribosome. The globular domain of the protein is located near the polypeptide exit tunnel on the outside of the subunit, while an extended beta-hairpin is found that lines the wall of the exit tunnel in the center of the 70S ribosome. This Trichormus variabilis (strain ATCC 29413 / PCC 7937) (Anabaena variabilis) protein is Large ribosomal subunit protein uL22.